A 400-amino-acid polypeptide reads, in one-letter code: Ubiquitin-like modifier-activating enzyme 5 (400 aa).

ATP-binding residues include glycine 76, aspartate 97, lysine 120, asparagine 143, and asparagine 177. The Zn(2+) site is built by cysteine 219 and cysteine 222. Cysteine 243 (glycyl thioester intermediate) is an active-site residue. Residues cysteine 296 and cysteine 301 each contribute to the Zn(2+) site.

The protein belongs to the ubiquitin-activating E1 family. UBA5 subfamily.

E1-like enzyme which activates UFM1. The protein is Ubiquitin-like modifier-activating enzyme 5 of Drosophila virilis (Fruit fly).